Here is a 429-residue protein sequence, read N- to C-terminus: Ribosomal RNA small subunit methyltransferase B (429 aa).

S-adenosyl-L-methionine is bound by residues 254–260, aspartate 277, aspartate 303, and aspartate 322; that span reads CAAPGGK. Cysteine 375 serves as the catalytic Nucleophile. The disordered stretch occupies residues 397–419; that stretch reads ALSETGTPDQPGQQNLPGGEEGD. Positions 400 to 412 are enriched in polar residues; that stretch reads ETGTPDQPGQQNL.

This sequence belongs to the class I-like SAM-binding methyltransferase superfamily. RsmB/NOP family.

Its subcellular location is the cytoplasm. It carries out the reaction cytidine(967) in 16S rRNA + S-adenosyl-L-methionine = 5-methylcytidine(967) in 16S rRNA + S-adenosyl-L-homocysteine + H(+). In terms of biological role, specifically methylates the cytosine at position 967 (m5C967) of 16S rRNA. In Salmonella enteritidis PT4 (strain P125109), this protein is Ribosomal RNA small subunit methyltransferase B.